The following is a 270-amino-acid chain: Diaminopimelate epimerase (270 aa).

Substrate is bound by residues N15, Q49, and N66. C75 functions as the Proton donor in the catalytic mechanism. Substrate contacts are provided by residues 76–77 (GN), N155, N187, and 204–205 (ER). C213 functions as the Proton acceptor in the catalytic mechanism. A substrate-binding site is contributed by 214–215 (GS).

Belongs to the diaminopimelate epimerase family. In terms of assembly, homodimer.

The protein localises to the cytoplasm. The catalysed reaction is (2S,6S)-2,6-diaminopimelate = meso-2,6-diaminopimelate. Its pathway is amino-acid biosynthesis; L-lysine biosynthesis via DAP pathway; DL-2,6-diaminopimelate from LL-2,6-diaminopimelate: step 1/1. In terms of biological role, catalyzes the stereoinversion of LL-2,6-diaminopimelate (L,L-DAP) to meso-diaminopimelate (meso-DAP), a precursor of L-lysine and an essential component of the bacterial peptidoglycan. This chain is Diaminopimelate epimerase, found in Rickettsia akari (strain Hartford).